The chain runs to 130 residues: Small ribosomal subunit protein uS11c (130 aa).

Belongs to the universal ribosomal protein uS11 family. In terms of assembly, part of the 30S ribosomal subunit.

The protein localises to the plastid. The protein resides in the chloroplast. This Drimys granadensis protein is Small ribosomal subunit protein uS11c.